The primary structure comprises 169 residues: Keratin-associated protein 9-7 (169 aa).

17 tandem repeats follow at residues 8-12 (CCQPT), 13-17 (CCRTT), 32-36 (CCQPS), 37-41 (CCVSS), 46-50 (CCHPT), 51-55 (CCQNT), 56-60 (CCRTT), 61-65 (CCQPT), 75-79 (CCSTP), 80-84 (CCQPI), 85-89 (CCGSS), 90-94 (CCGQT), 100-104 (CCQPS), 139-143 (CCRPA), 144-148 (CCETT), 149-153 (CCRTT), and 163-167 (CCQPA). The 17 X 5 AA repeats of C-C-[VGSREQH]-[SQTPN]-[STPAI] stretch occupies residues 8-167 (CCQPTCCRTT…TCVTSCCQPA (160 aa)).

It belongs to the KRTAP type 9 family. In terms of assembly, interacts with hair keratins.

In terms of biological role, in the hair cortex, hair keratin intermediate filaments are embedded in an interfilamentous matrix, consisting of hair keratin-associated proteins (KRTAP), which are essential for the formation of a rigid and resistant hair shaft through their extensive disulfide bond cross-linking with abundant cysteine residues of hair keratins. The matrix proteins include the high-sulfur and high-glycine-tyrosine keratins. The protein is Keratin-associated protein 9-7 of Homo sapiens (Human).